Reading from the N-terminus, the 1506-residue chain is Phosphatidylinositol 3-kinase C2 domain-containing subunit gamma (1506 aa).

The tract at residues 1–34 (MAYSWQTEPNRTEPQEDGSDTQQFHHTNQHLSSR) is disordered. Residues 20–34 (DTQQFHHTNQHLSSR) show a composition bias toward polar residues. A PI3K-RBD domain is found at 285-371 (DTKFRVKISI…IQLHLQKNRD (87 aa)). Positions 541–689 (LQSHLSFTVC…SPLTLQIDFP (149 aa)) constitute a C2 PI3K-type domain. One can recognise a PIK helical domain in the interval 704-880 (RTDHEEPPRE…QELLAALQFC (177 aa)). Residues 949–1227 (DRDACSYFTS…KIKESLECFP (279 aa)) enclose the PI3K/PI4K catalytic domain. Residues 955 to 961 (YFTSNAS) form a G-loop region. The tract at residues 1091-1099 (GVCDRHNDN) is catalytic loop. Residues 1110 to 1136 (HIDFGKFLGHAQTFGGIKRDRAPFIFT) are activation loop. Residues 1260–1372 (LNKTRTIQRV…SFFLSEHIQP (113 aa)) form the PX domain. In terms of domain architecture, C2 spans 1381 to 1506 (DPGENSLDKS…KWYPLGNSII (126 aa)).

Belongs to the PI3/PI4-kinase family. As to expression, expressed predominantly in liver. Also found in kidney, lung and lymphoid tissue. Down-regulated in BeF3 cells expressing the BCR-ABL oncogene p185.

The protein resides in the membrane. It carries out the reaction a 1,2-diacyl-sn-glycero-3-phospho-(1D-myo-inositol 4-phosphate) + ATP = a 1,2-diacyl-sn-glycero-3-phospho-(1D-myo-inositol-3,4-bisphosphate) + ADP + H(+). The enzyme catalyses a 1,2-diacyl-sn-glycero-3-phospho-(1D-myo-inositol) + ATP = a 1,2-diacyl-sn-glycero-3-phospho-(1D-myo-inositol-3-phosphate) + ADP + H(+). Functionally, generates phosphatidylinositol 3-phosphate (PtdIns3P) and phosphatidylinositol 3,4-bisphosphate (PtdIns(3,4)P2) that act as second messengers. May play a role in SDF1A-stimulated chemotaxis. This Mus musculus (Mouse) protein is Phosphatidylinositol 3-kinase C2 domain-containing subunit gamma (Pik3c2g).